The following is a 357-amino-acid chain: UDP-N-acetylglucosamine--N-acetylmuramyl-(pentapeptide) pyrophosphoryl-undecaprenol N-acetylglucosamine transferase (357 aa).

Residues 15–17, Asn-125, Ser-190, and Gln-290 contribute to the UDP-N-acetyl-alpha-D-glucosamine site; that span reads SGG.

This sequence belongs to the glycosyltransferase 28 family. MurG subfamily.

Its subcellular location is the cell inner membrane. The enzyme catalyses di-trans,octa-cis-undecaprenyl diphospho-N-acetyl-alpha-D-muramoyl-L-alanyl-D-glutamyl-meso-2,6-diaminopimeloyl-D-alanyl-D-alanine + UDP-N-acetyl-alpha-D-glucosamine = di-trans,octa-cis-undecaprenyl diphospho-[N-acetyl-alpha-D-glucosaminyl-(1-&gt;4)]-N-acetyl-alpha-D-muramoyl-L-alanyl-D-glutamyl-meso-2,6-diaminopimeloyl-D-alanyl-D-alanine + UDP + H(+). It participates in cell wall biogenesis; peptidoglycan biosynthesis. In terms of biological role, cell wall formation. Catalyzes the transfer of a GlcNAc subunit on undecaprenyl-pyrophosphoryl-MurNAc-pentapeptide (lipid intermediate I) to form undecaprenyl-pyrophosphoryl-MurNAc-(pentapeptide)GlcNAc (lipid intermediate II). In Chlamydia pneumoniae (Chlamydophila pneumoniae), this protein is UDP-N-acetylglucosamine--N-acetylmuramyl-(pentapeptide) pyrophosphoryl-undecaprenol N-acetylglucosamine transferase.